We begin with the raw amino-acid sequence, 500 residues long: Glucokinase-1 (500 aa).

The residue at position 2 (Ser-2) is an N-acetylserine. Ser-2 is modified (phosphoserine). The Hexokinase domain maps to 12–498; sequence RAVIQAVDQI…SGVGAALCAL (487 aa). The tract at residues 74 to 216 is hexokinase small subdomain; sequence NGTERGVLLA…MPMIKVVALT (143 aa). An ATP-binding site is contributed by Lys-110. Residues 158 to 184 are glucose-binding; that stretch reads KLGFTFSYPVDQTSLNSGTLIRWTKGF. Residues 217–487 form a hexokinase large subdomain region; the sequence is NDTVGTYLSH…RKVHLKIAKD (271 aa). Ser-470 is subject to Phosphoserine. 487–492 serves as a coordination point for ATP; it reads DGSGVG.

Belongs to the hexokinase family. Monomer.

It catalyses the reaction D-glucose + ATP = D-glucose 6-phosphate + ADP + H(+). The protein operates within carbohydrate metabolism; hexose metabolism. It participates in carbohydrate degradation; glycolysis; D-glyceraldehyde 3-phosphate and glycerone phosphate from D-glucose: step 1/4. Two isoenzymes, hexokinase-1 and hexokinase-2, can phosphorylate keto- and aldohexoses in yeast, whereas a third isoenzyme, GLK, is specific for aldohexoses. All glucose phosphorylating enzymes are involved in glucose uptake. This Saccharomyces cerevisiae (strain ATCC 204508 / S288c) (Baker's yeast) protein is Glucokinase-1 (GLK1).